We begin with the raw amino-acid sequence, 170 residues long: Protein Rex (170 aa).

Positions 1–16 (MPKTRRQRTRRARRNR) are enriched in basic residues. Disordered regions lie at residues 1–27 (MPKTRRQRTRRARRNRPPTPWPISQDL) and 69–170 (VQST…GEKP). A Nuclear localization signal, and RNA-binding (RxRE) motif is present at residues 2–19 (PKTRRQRTRRARRNRPPT). Residues 57 to 71 (PPAYIDMPSWPPVQS) form a homomultimerization region. The span at 82-95 (ALSALLSNTLSLAS) shows a compositional bias: low complexity. A Nuclear export signal motif is present at residues 83–94 (LSALLSNTLSLA). The interval 124–132 (PSFNQCEST) is homomultimerization. Residues 143–160 (PSGISSPPSPSPNLASVP) show a composition bias toward low complexity. Ser151 and Ser153 each carry phosphoserine; by host. Polar residues predominate over residues 161-170 (KTSTPPGEKP).

This sequence belongs to the deltaretrovirus Rex protein family. In terms of assembly, homomultimer. Post-translationally, phosphorylation is essential for RNA-binding and function.

It localises to the host nucleus. The protein localises to the host nucleolus. The protein resides in the host cytoplasm. Its function is as follows. Rex escorts unspliced gag-pro-pol and singly spliced env mRNAs out of the nucleus of infected cells. These mRNAs carry a recognition sequence called Rex responsive element (RxRE or XRE) located at the 3' region of the long terminal repeat (LTR). This function is essential since most HTLV proteins are translated from unspliced or partially spliced pre-mRNAs that cannot exit the nucleus by the pathway used by fully processed cellular mRNAs. This Human T-cell leukemia virus 2 (HTLV-2) protein is Protein Rex.